The primary structure comprises 140 residues: Large ribosomal subunit protein uL11 (140 aa).

This sequence belongs to the universal ribosomal protein uL11 family. In terms of assembly, part of the ribosomal stalk of the 50S ribosomal subunit. Interacts with L10 and the large rRNA to form the base of the stalk. L10 forms an elongated spine to which L12 dimers bind in a sequential fashion forming a multimeric L10(L12)X complex. Post-translationally, one or more lysine residues are methylated.

Functionally, forms part of the ribosomal stalk which helps the ribosome interact with GTP-bound translation factors. This is Large ribosomal subunit protein uL11 from Staphylococcus aureus (strain Mu3 / ATCC 700698).